The chain runs to 160 residues: Bacterial microcompartment shell protein PduK (160 aa).

The BMC domain maps to 11–96 (SLGLLEVCGL…PGEGILLAET (86 aa)).

Belongs to the bacterial microcompartments protein family. In terms of assembly, interacts with shell proteins PduA and PduP and assembly protein PduM. Requires Fe cation as cofactor.

Its subcellular location is the bacterial microcompartment. The protein operates within polyol metabolism; 1,2-propanediol degradation. In terms of biological role, a minor shell protein of the bacterial microcompartment (BMC) dedicated to 1,2-propanediol (1,2-PD) degradation. The isolated BMC shell component protein ratio for J:A:B':B:K:T:U is approximately 15:10:7:6:1:1:2. Not required for structural integrity of BMCs nor to mitigate propionaldehyde toxicity, it might be involved in spatial organization of BMCs. Functionally, the 1,2-PD-specific bacterial microcompartment (BMC) concentrates low levels of 1,2-PD catabolic enzymes, concentrates volatile reaction intermediates thus enhancing pathway flux and keeps the level of toxic, mutagenic propionaldehyde low. In Salmonella typhimurium (strain LT2 / SGSC1412 / ATCC 700720), this protein is Bacterial microcompartment shell protein PduK.